A 414-amino-acid polypeptide reads, in one-letter code: MRVAVLSIGDELLSGEVVDTNASHIADRLFQAGGRVERHLTVPDDAEAIASALTELGARSDAVIVTGGLGPTPDDLTAEAAARAAGTELELSSEALDHLERFAQRITGELHPANRRQALLPKGCRLIPNPLGTALGFVVRIGQADCFFMPGVPYEMERMLEETVLPELTGRFEAGWQRVTLKLFGIAEAAIAELLEGAIPEGSPVQLAYCVKFPEIHLILRATASDAPFLQQAAGELRQRLSAYLFAEDREEMDDRLALLLRESGLTLALAESCTGGMIAARITAVAGSSAYFLEGNVTYSNEAKTRMLQVPAPLIAEHGAVSAEVARAMAVGAREAAGSDLALSVTGIAGPDGGTPEKPVGTVYLALVDQGSCRVERFNFQGDRDRVRSITCFTALDWLRRYLLTRKTTPGRG.

The protein belongs to the CinA family.

The protein is CinA-like protein of Citrifermentans bemidjiense (strain ATCC BAA-1014 / DSM 16622 / JCM 12645 / Bem) (Geobacter bemidjiensis).